The following is a 444-amino-acid chain: Putative methylesterase 13, chloroplastic (444 aa).

3 disordered regions span residues 1 to 32 (MGNS…KYKY), 49 to 90 (PSLS…KDSH), and 124 to 176 (SVVY…QLVD). The N-terminal 60 residues, 1-60 (MGNSFTCISHEQEQRPKKSSGGGGNNSGKYKYVRRLSLMPSFRRRTLLPSLSCSGSSSTS), are a transit peptide targeting the chloroplast. Over residues 49–64 (PSLSCSGSSSTSSSKK) the composition is skewed to low complexity. The span at 65–82 (GGIKAKTKKIRERHHHHH) shows a compositional bias: basic residues. A compositionally biased stretch (polar residues) spans 124–148 (SVVYPSAQPSGTSSGPVSAVQTPKK). Positions 149–164 (SSAGFVRSSSSRQRSS) are enriched in low complexity. Residues 190–310 (FVLVHGGGFG…LFNQQLGSND (121 aa)) enclose the AB hydrolase-1 domain. Asp264 functions as the Acyl-ester intermediate in the catalytic mechanism. Active-site charge relay system residues include Asp390 and His418.

The protein belongs to the AB hydrolase superfamily. Methylesterase family.

The protein localises to the plastid. It is found in the chloroplast. In terms of biological role, putative methylesterase. The protein is Putative methylesterase 13, chloroplastic of Arabidopsis thaliana (Mouse-ear cress).